Consider the following 498-residue polypeptide: Dynein regulatory complex subunit 5 (498 aa).

Disordered regions lie at residues 27–52 (ALGSSSTGPTSLKTSSTPTPGQLKTK) and 200–223 (MPTPLQGEEQSDSGSEGEGSEPEK). Low complexity predominate over residues 28–47 (LGSSSTGPTSLKTSSTPTPG). LRR repeat units follow at residues 276 to 299 (CHTLKIFKLTRSKVDDDKARILIR), 306 to 327 (ALEELDLSHNLIGDRGARAAAK), 333 to 353 (RLRVLNLANNQLQAPGAQSLA), 361 to 382 (NLVFLNLRLNCIEDEGGQAIAH), 389 to 409 (CLSVLHLGGNKLSEPTATLLS), and 417 to 438 (TLVSLNLSCNHIGQDGGKQLLE).

Belongs to the DRC5 family. In terms of assembly, component of the nexin-dynein regulatory complex (N-DRC). Interacts with DRC1. Interacts with FBXL13/DRC6, DRC3 and DRC7. Testis-specific (at protein level).

Its subcellular location is the cell projection. The protein localises to the cilium. The protein resides in the flagellum. It is found in the cytoplasm. It localises to the cytoskeleton. Its subcellular location is the flagellum axoneme. Its function is as follows. Component of the nexin-dynein regulatory complex (N-DRC) a key regulator of ciliary/flagellar motility which maintains the alignment and integrity of the distal axoneme and regulates microtubule sliding in motile axonemes. May play a role in the assembly of N-DRC. Required for sperm motility. This Mus musculus (Mouse) protein is Dynein regulatory complex subunit 5 (Tcte1).